Consider the following 442-residue polypeptide: tRNA modification GTPase MnmE (442 aa).

Positions 24, 82, and 120 each coordinate (6S)-5-formyl-5,6,7,8-tetrahydrofolate. Positions 217–367 (GLHIVITGEP…LVSVIKEKVE (151 aa)) constitute a TrmE-type G domain. GTP-binding positions include 227–232 (NVGKST), 246–252 (SEYVGTT), and 271–274 (DTAG). Ser-231 and Thr-252 together coordinate Mg(2+). Lys-442 is a binding site for (6S)-5-formyl-5,6,7,8-tetrahydrofolate.

The protein belongs to the TRAFAC class TrmE-Era-EngA-EngB-Septin-like GTPase superfamily. TrmE GTPase family. Homodimer. Heterotetramer of two MnmE and two MnmG subunits. K(+) is required as a cofactor.

Its subcellular location is the cytoplasm. In terms of biological role, exhibits a very high intrinsic GTPase hydrolysis rate. Involved in the addition of a carboxymethylaminomethyl (cmnm) group at the wobble position (U34) of certain tRNAs, forming tRNA-cmnm(5)s(2)U34. This Wolbachia sp. subsp. Brugia malayi (strain TRS) protein is tRNA modification GTPase MnmE.